The sequence spans 215 residues: Histidine biosynthesis bifunctional protein HisIE (215 aa).

The segment at 1-118 is phosphoribosyl-AMP cyclohydrolase; it reads MTKSISIEHL…YKNDVALLQI (118 aa). The tract at residues 119–215 is phosphoribosyl-ATP pyrophosphohydrolase; it reads IPQVSAKIKE…HVEKEGQQRE (97 aa).

It in the N-terminal section; belongs to the PRA-CH family. The protein in the C-terminal section; belongs to the PRA-PH family.

Its subcellular location is the cytoplasm. The enzyme catalyses 1-(5-phospho-beta-D-ribosyl)-ATP + H2O = 1-(5-phospho-beta-D-ribosyl)-5'-AMP + diphosphate + H(+). The catalysed reaction is 1-(5-phospho-beta-D-ribosyl)-5'-AMP + H2O = 1-(5-phospho-beta-D-ribosyl)-5-[(5-phospho-beta-D-ribosylamino)methylideneamino]imidazole-4-carboxamide. The protein operates within amino-acid biosynthesis; L-histidine biosynthesis; L-histidine from 5-phospho-alpha-D-ribose 1-diphosphate: step 2/9. It participates in amino-acid biosynthesis; L-histidine biosynthesis; L-histidine from 5-phospho-alpha-D-ribose 1-diphosphate: step 3/9. This chain is Histidine biosynthesis bifunctional protein HisIE, found in Oceanobacillus iheyensis (strain DSM 14371 / CIP 107618 / JCM 11309 / KCTC 3954 / HTE831).